Here is a 455-residue protein sequence, read N- to C-terminus: Probable ATP-dependent RNA helicase DDX47 (455 aa).

A compositionally biased stretch (basic and acidic residues) spans 1-10; the sequence is MAAPEEHDSP. The tract at residues 1-20 is disordered; the sequence is MAAPEEHDSPTEASQPIVEE. Ala2 is modified (N-acetylalanine). Position 9 is a phosphoserine (Ser9). The Q motif motif lies at 24–52; the sequence is KTFKDLGVTDVLCEACDQLGWTKPTKIQI. Positions 55 to 226 constitute a Helicase ATP-binding domain; sequence IPLALQGRDI…RAALKNPVKC (172 aa). 68 to 75 is an ATP binding site; the sequence is AETGSGKT. Position 149 is a phosphothreonine (Thr149). A DEAD box motif is present at residues 174–177; that stretch reads DEAD. Residues 237-397 enclose the Helicase C-terminal domain; that stretch reads KLQQYYIFIP…GFPTQDDEVM (161 aa). The segment covering 413–428 has biased composition (basic and acidic residues); it reads ELREHGEKKKRSREDA. The segment at 413 to 455 is disordered; it reads ELREHGEKKKRSREDAGDNDDTEGAIGVRNKVAGGKMKKRKGR. Ser424 carries the post-translational modification Phosphoserine.

The protein belongs to the DEAD box helicase family. DDX47/RRP3 subfamily. As to quaternary structure, interacts with AGO1 and AGO2. Interacts with GABARAP. Interacts with NOL8; the interaction is RNA-dependent. In terms of tissue distribution, expressed in skin, lung and breast. Also expressed in the brain.

The protein localises to the nucleus. The protein resides in the nucleolus. The catalysed reaction is ATP + H2O = ADP + phosphate + H(+). Functionally, required for efficient ribosome biogenesis. May have a role in mRNA splicing. Involved in apoptosis. This is Probable ATP-dependent RNA helicase DDX47 (DDX47) from Homo sapiens (Human).